Reading from the N-terminus, the 301-residue chain is General transcription and DNA repair factor IIH subunit TFB4 (301 aa).

Residues 259–276 (CSVCLSIFCEHHKKCSTC) form a C4-type zinc finger.

The protein belongs to the TFB4 family. In terms of assembly, component of the 7-subunit TFIIH core complex composed of XPB, XPD, TFB1/GTF2H1, GTF2H2/P44, TFB4/GTF2H3, TFB2/GTF2H4 and TFB5/GTF2H5, which is active in NER. The core complex associates with the 3-subunit CDK-activating kinase (CAK) module composed of CYCH1/cyclin H1, CDKD and MAT1/At4g30820 to form the 10-subunit holoenzyme (holo-TFIIH) active in transcription.

It localises to the nucleus. Its function is as follows. Component of the general transcription and DNA repair factor IIH (TFIIH) core complex, which is involved in general and transcription-coupled nucleotide excision repair (NER) of damaged DNA and, when complexed to CAK, in RNA transcription by RNA polymerase II. In NER, TFIIH acts by opening DNA around the lesion to allow the excision of the damaged oligonucleotide and its replacement by a new DNA fragment. In transcription, TFIIH has an essential role in transcription initiation. When the pre-initiation complex (PIC) has been established, TFIIH is required for promoter opening and promoter escape. Phosphorylation of the C-terminal tail (CTD) of the largest subunit of RNA polymerase II by the kinase module CAK controls the initiation of transcription. The sequence is that of General transcription and DNA repair factor IIH subunit TFB4 from Arabidopsis thaliana (Mouse-ear cress).